We begin with the raw amino-acid sequence, 228 residues long: Ribose-5-phosphate isomerase A (228 aa).

Substrate is bound by residues 32–35 (TGST), 85–88 (DGAD), and 98–101 (KGGG). Glu107 functions as the Proton acceptor in the catalytic mechanism. A substrate-binding site is contributed by Lys125.

Belongs to the ribose 5-phosphate isomerase family. Homodimer.

The catalysed reaction is aldehydo-D-ribose 5-phosphate = D-ribulose 5-phosphate. Its pathway is carbohydrate degradation; pentose phosphate pathway; D-ribose 5-phosphate from D-ribulose 5-phosphate (non-oxidative stage): step 1/1. Its function is as follows. Catalyzes the reversible conversion of ribose-5-phosphate to ribulose 5-phosphate. The protein is Ribose-5-phosphate isomerase A of Cupriavidus necator (strain ATCC 17699 / DSM 428 / KCTC 22496 / NCIMB 10442 / H16 / Stanier 337) (Ralstonia eutropha).